A 360-amino-acid polypeptide reads, in one-letter code: Phospho-N-acetylmuramoyl-pentapeptide-transferase (360 aa).

Helical transmembrane passes span R24–I44, G69–W89, W92–F112, M133–N153, I158–V178, G199–S219, V239–Y259, V263–I283, F288–V308, and Q337–L357.

This sequence belongs to the glycosyltransferase 4 family. MraY subfamily. The cofactor is Mg(2+).

It is found in the cell inner membrane. It catalyses the reaction UDP-N-acetyl-alpha-D-muramoyl-L-alanyl-gamma-D-glutamyl-meso-2,6-diaminopimeloyl-D-alanyl-D-alanine + di-trans,octa-cis-undecaprenyl phosphate = di-trans,octa-cis-undecaprenyl diphospho-N-acetyl-alpha-D-muramoyl-L-alanyl-D-glutamyl-meso-2,6-diaminopimeloyl-D-alanyl-D-alanine + UMP. The protein operates within cell wall biogenesis; peptidoglycan biosynthesis. In terms of biological role, catalyzes the initial step of the lipid cycle reactions in the biosynthesis of the cell wall peptidoglycan: transfers peptidoglycan precursor phospho-MurNAc-pentapeptide from UDP-MurNAc-pentapeptide onto the lipid carrier undecaprenyl phosphate, yielding undecaprenyl-pyrophosphoryl-MurNAc-pentapeptide, known as lipid I. The protein is Phospho-N-acetylmuramoyl-pentapeptide-transferase of Neisseria gonorrhoeae (strain ATCC 700825 / FA 1090).